The sequence spans 537 residues: DEAD-box ATP-dependent RNA helicase 5 (537 aa).

Residues 1–97 are disordered; that stretch reads MAGQKQELPV…EDLGEGESEQ (97 aa). Residues 22 to 80 adopt a coiled-coil conformation; it reads TNKKKKKSKKNKHTEENHEVEEVPQEVTNGVEEELSNKEKKKKRKREEKESEKNKKKDV. Residues 23 to 33 show a composition bias toward basic residues; sequence NKKKKKSKKNK. The segment covering 68–87 has biased composition (basic and acidic residues); the sequence is EEKESEKNKKKDVPEKKLEA. The Q motif signature appears at 116–142; the sequence is KTFAESNLPENVLDCCKTFEKPSPIQS. The 180-residue stretch at 145-324 folds into the Helicase ATP-binding domain; it reads WPFLLDGRDL…QEFMDPNPIK (180 aa). 158–165 lines the ATP pocket; sequence AKTGSGKT. Positions 272 to 275 match the DEAD box motif; that stretch reads DEAD. Residues 349-500 form the Helicase C-terminal domain; the sequence is ARDQRLIALL…VVPADLLKFG (152 aa). Serine 533 carries the post-translational modification Phosphoserine.

Belongs to the DEAD box helicase family. DDX5/DBP2 subfamily.

Its subcellular location is the nucleus. The protein localises to the nucleolus. The catalysed reaction is ATP + H2O = ADP + phosphate + H(+). Its function is as follows. ATP-dependent RNA helicase required for 60S ribosomal subunit synthesis. Involved in efficient pre-rRNA processing, predominantly at site A3, which is necessary for the normal formation of 25S and 5.8S rRNAs. The chain is DEAD-box ATP-dependent RNA helicase 5 (RH5) from Arabidopsis thaliana (Mouse-ear cress).